Reading from the N-terminus, the 378-residue chain is Sperm microtubule associated protein 2 (378 aa).

2 disordered regions span residues 1–35 (MGELGEHRSRSSLLSIPVLDTKTSGGSEYRESDGS) and 47–79 (WLQSSQATTERNTDDPEEEIPPEEMVGEELPEV). The segment covering 47 to 56 (WLQSSQATTE) has biased composition (polar residues). Residues 61-77 (DPEEEIPPEEMVGEELP) are compositionally biased toward acidic residues. THEG repeat units follow at residues 113-132 (AKCRKKKNHRLLELAKPKFN), 179-198 (TITVPEVSRRVEELSRPKRF), 217-236 (STLEYQASNRLKRLATPKIR), 253-272 (AAQMAVPTPRTLRLAKPRAP), 285-304 (PKPYVSDYNRLLQLATPKAL), 321-340 (VTKNAVASSRIISLAQPKIR), and 355-374 (ASLVAQASPRIYELAVPKHI). Phosphoserine is present on Ser-290.

Interacts with CCT5.

It is found in the nucleus. Functionally, may be involved (but not essential) in spermatogenesis. In Rattus norvegicus (Rat), this protein is Sperm microtubule associated protein 2.